The primary structure comprises 359 residues: 3-dehydroquinate synthase (359 aa).

NAD(+)-binding positions include 71–76 (DGEQYK), 105–109 (GVIGD), 129–130 (TT), K142, K151, and 169–172 (CLAT). Zn(2+)-binding residues include E184, H247, and H264.

The protein belongs to the sugar phosphate cyclases superfamily. Dehydroquinate synthase family. Co(2+) is required as a cofactor. The cofactor is Zn(2+). It depends on NAD(+) as a cofactor.

The protein resides in the cytoplasm. It carries out the reaction 7-phospho-2-dehydro-3-deoxy-D-arabino-heptonate = 3-dehydroquinate + phosphate. It functions in the pathway metabolic intermediate biosynthesis; chorismate biosynthesis; chorismate from D-erythrose 4-phosphate and phosphoenolpyruvate: step 2/7. Its function is as follows. Catalyzes the conversion of 3-deoxy-D-arabino-heptulosonate 7-phosphate (DAHP) to dehydroquinate (DHQ). The chain is 3-dehydroquinate synthase from Baumannia cicadellinicola subsp. Homalodisca coagulata.